The following is a 998-amino-acid chain: Bifunctional glutamine synthetase adenylyltransferase/adenylyl-removing enzyme (998 aa).

The interval 1–487 is adenylyl removase; the sequence is MVVTKPATQR…LHAKLFYQPL (487 aa). The adenylyl transferase stretch occupies residues 492–998; the sequence is GPAGLEIRHG…KAVVRKVFGS (507 aa).

This sequence belongs to the GlnE family. Mg(2+) is required as a cofactor.

The catalysed reaction is [glutamine synthetase]-O(4)-(5'-adenylyl)-L-tyrosine + phosphate = [glutamine synthetase]-L-tyrosine + ADP. The enzyme catalyses [glutamine synthetase]-L-tyrosine + ATP = [glutamine synthetase]-O(4)-(5'-adenylyl)-L-tyrosine + diphosphate. Its function is as follows. Involved in the regulation of glutamine synthetase GlnA, a key enzyme in the process to assimilate ammonia. When cellular nitrogen levels are high, the C-terminal adenylyl transferase (AT) inactivates GlnA by covalent transfer of an adenylyl group from ATP to specific tyrosine residue of GlnA, thus reducing its activity. Conversely, when nitrogen levels are low, the N-terminal adenylyl removase (AR) activates GlnA by removing the adenylyl group by phosphorolysis, increasing its activity. The regulatory region of GlnE binds the signal transduction protein PII (GlnB) which indicates the nitrogen status of the cell. The chain is Bifunctional glutamine synthetase adenylyltransferase/adenylyl-removing enzyme from Mycobacterium avium (strain 104).